The primary structure comprises 361 residues: DNA replication and repair protein RecF (361 aa).

30–37 (GANGSGKT) serves as a coordination point for ATP.

This sequence belongs to the RecF family.

It localises to the cytoplasm. Its function is as follows. The RecF protein is involved in DNA metabolism; it is required for DNA replication and normal SOS inducibility. RecF binds preferentially to single-stranded, linear DNA. It also seems to bind ATP. This is DNA replication and repair protein RecF from Chromohalobacter salexigens (strain ATCC BAA-138 / DSM 3043 / CIP 106854 / NCIMB 13768 / 1H11).